Reading from the N-terminus, the 402-residue chain is ORC1-type DNA replication protein 17 (402 aa).

Tyr223 and Arg235 together coordinate ATP.

The protein belongs to the CDC6/cdc18 family.

Involved in regulation of DNA replication. This is ORC1-type DNA replication protein 17 (cdc6q) from Haloarcula marismortui (strain ATCC 43049 / DSM 3752 / JCM 8966 / VKM B-1809) (Halobacterium marismortui).